The primary structure comprises 372 residues: N-methyl-L-tryptophan oxidase (372 aa).

4-34 lines the FAD pocket; sequence DLIIIGSGSVGAAAGYYATRAGLKVLMTDAH. Residue Cys307 is modified to S-8alpha-FAD cysteine.

The protein belongs to the MSOX/MTOX family. MTOX subfamily. In terms of assembly, monomer. FAD serves as cofactor.

It carries out the reaction N(alpha)-methyl-L-tryptophan + O2 + H2O = L-tryptophan + formaldehyde + H2O2. In terms of biological role, catalyzes the oxidative demethylation of N-methyl-L-tryptophan. The protein is N-methyl-L-tryptophan oxidase of Salmonella newport (strain SL254).